Reading from the N-terminus, the 536-residue chain is MLKVSKRYYGFQSKSPFQLLPDFRLKCGLEIHTQLNTKFKLFSFSTNDPFHSIDSPNSNVSFFDAALPGTQPILNYEAVIDAIKLSLALNCDINANSQFDRKHYFYGDQPLGYQITQHYSPISSNGKLSLFENIDNIDQSQKDIGIIQLQIEQDTGKSMYDDSKHFTRIDLNRSNVPLIEMVTKPDFTDLKQVRSFIKKYQNLVRHLKISSGDLETGAMRVDVNLSINDYARVELKNLPNTSSIVNAIKYEYNRQVEIIKNGSADELLTSPETRSWTGVKTVKLRSKETTIDYRYLPDPELPRVILDNDVITNISNSIPTLPDELLSRLISKPYNLSMKDAKILVLNSNGQNEMYTQEELQNFYLKVFDCYYNVVGEKLNHKLPVNWIIHELIGSLNKLELPLSKVLPKLSPEKFSEFIVLIHNKEISNTSAKLLLFHVLNQIKENDHSIREINFDSLIEEFELKPATNASKVDLTELCQTIITELNNEKLLNDIISGKKKNSIQYLVGLGMRASQGTLSPQSLEETFKKILQVKW.

It belongs to the GatB/GatE family. GatB subfamily. As to quaternary structure, subunit of the heterotrimeric GatFAB amidotransferase (AdT) complex, composed of A, B and F subunits.

Its subcellular location is the mitochondrion. It carries out the reaction L-glutamyl-tRNA(Gln) + L-glutamine + ATP + H2O = L-glutaminyl-tRNA(Gln) + L-glutamate + ADP + phosphate + H(+). In terms of biological role, allows the formation of correctly charged Gln-tRNA(Gln) through the transamidation of misacylated Glu-tRNA(Gln) in the mitochondria. The reaction takes place in the presence of glutamine and ATP through an activated gamma-phospho-Glu-tRNA(Gln). This Vanderwaltozyma polyspora (strain ATCC 22028 / DSM 70294 / BCRC 21397 / CBS 2163 / NBRC 10782 / NRRL Y-8283 / UCD 57-17) (Kluyveromyces polysporus) protein is Glutamyl-tRNA(Gln) amidotransferase subunit B, mitochondrial.